The sequence spans 403 residues: Probable tRNA sulfurtransferase (403 aa).

Positions 61–166 (EAIAESLKDV…SGYSYIMCDE (106 aa)) constitute a THUMP domain. ATP contacts are provided by residues 184–185 (LL), 209–210 (HF), R266, G288, and Q297.

This sequence belongs to the ThiI family.

It localises to the cytoplasm. It catalyses the reaction [ThiI sulfur-carrier protein]-S-sulfanyl-L-cysteine + a uridine in tRNA + 2 reduced [2Fe-2S]-[ferredoxin] + ATP + H(+) = [ThiI sulfur-carrier protein]-L-cysteine + a 4-thiouridine in tRNA + 2 oxidized [2Fe-2S]-[ferredoxin] + AMP + diphosphate. The catalysed reaction is [ThiS sulfur-carrier protein]-C-terminal Gly-Gly-AMP + S-sulfanyl-L-cysteinyl-[cysteine desulfurase] + AH2 = [ThiS sulfur-carrier protein]-C-terminal-Gly-aminoethanethioate + L-cysteinyl-[cysteine desulfurase] + A + AMP + 2 H(+). Its pathway is cofactor biosynthesis; thiamine diphosphate biosynthesis. Catalyzes the ATP-dependent transfer of a sulfur to tRNA to produce 4-thiouridine in position 8 of tRNAs, which functions as a near-UV photosensor. Also catalyzes the transfer of sulfur to the sulfur carrier protein ThiS, forming ThiS-thiocarboxylate. This is a step in the synthesis of thiazole, in the thiamine biosynthesis pathway. The sulfur is donated as persulfide by IscS. This Bacillus cytotoxicus (strain DSM 22905 / CIP 110041 / 391-98 / NVH 391-98) protein is Probable tRNA sulfurtransferase.